The chain runs to 317 residues: Olfactory receptor 6P1 (317 aa).

Over 1–25 (MRNLSGGHVEEFVLVGFPTTPPLQL) the chain is Extracellular. N-linked (GlcNAc...) asparagine glycosylation is present at asparagine 3. Residues 26–46 (LLFVLFFAIYLLTLLENALIV) traverse the membrane as a helical segment. The Cytoplasmic portion of the chain corresponds to 47–54 (FTIWLAPS). The chain crosses the membrane as a helical span at residues 55–75 (LHRPMYFFLGHLSFLELWYIN). The Extracellular portion of the chain corresponds to 76-99 (VTIPRLLAAFLTQDGRVSYVGCMT). Cysteine 97 and cysteine 189 are oxidised to a cystine. Residues 100 to 120 (QLYFFIALACTECVLLAVMAY) form a helical membrane-spanning segment. The Cytoplasmic portion of the chain corresponds to 121–139 (DRYLAICGPLLYPSLMPSS). Residues 140 to 160 (LATRLAAASWGSGFFSSMMKL) form a helical membrane-spanning segment. Residues 161–197 (LFISQLSYCGPNIINHFFCDISPLLNLTCSDKEQAEL) lie on the Extracellular side of the membrane. The N-linked (GlcNAc...) asparagine glycan is linked to asparagine 186. Residues 198–217 (VDFLLALVMILLPLLAVVSS) form a helical membrane-spanning segment. At 218–237 (YTAIIAAILRIPTSRGRHKA) the chain is on the cytoplasmic side. The chain crosses the membrane as a helical span at residues 238–258 (FSTCAAHLAVVVIYYSSTLFT). Over 259-271 (YARPRAMYTFNHN) the chain is Extracellular. A helical membrane pass occupies residues 272 to 292 (KIISVLYTIIVPFFNPAIYCL). Residues 293-317 (RNKEVKEAFRKTVMGRCHYPRDVQD) are Cytoplasmic-facing.

This sequence belongs to the G-protein coupled receptor 1 family.

The protein resides in the cell membrane. Odorant receptor. The protein is Olfactory receptor 6P1 (OR6P1) of Homo sapiens (Human).